The primary structure comprises 1057 residues: Exportin-1 (1057 aa).

The region spanning 36–102 (AQMVLGKFQE…KNYIVSLIIR (67 aa)) is the Importin N-terminal domain. HEAT repeat units follow at residues 239-275 (AEPSKLVKLLLHKYFPEPLFRNSTLKCLTEIGNLNLG), 281-321 (AVFI…FIHT), 462-501 (NTQHIMLEKLQTLISGREFTFQRLNTLCWAIGSISGAQNK), 506-544 (RFLVTVIKDLLELCQNKKGKDNKAVIASDIMYIVGQYPR), 551-588 (KFLKTVVNKLFEFMHESHPGVQDMACDTFLKISKQCKR), 596-633 (EESQPFINELLNQLSTTIAHLEQSQIHTFYEAVGYMIA), 739-776 (KETLKLLETFIEKSSDKQVIYSNFLQPLLEAVLGDYRT), 781-818 (TRDPEVLSLMTAIITSLKQLVHPEVPKILEAVFETTLS), 855-892 (QQFKLLIDCVVWAFKHTERNISETGLHILKELIENVSK), 902-925 (KTYLVSLLNDILYILTDSFHKSGF), and 926-965 (ALECDILRMMFQVVENGVVKIPLFDPQQANFPSNSEYVKE).

This sequence belongs to the exportin family. As to quaternary structure, component of a nuclear export receptor complex.

It localises to the nucleus. It is found in the cytoplasm. The protein resides in the perinuclear region. Mediates the nuclear export of cellular proteins (cargos) bearing a leucine-rich nuclear export signal (NES). This Dictyostelium discoideum (Social amoeba) protein is Exportin-1 (xpo1).